The sequence spans 640 residues: Threonine--tRNA ligase (640 aa).

The 61-residue stretch at 1-61 (MPTITLPDGS…ENDASLQIIT (61 aa)) folds into the TGS domain. Residues 242–533 (DHRKIGKRLG…LIEHYEGAFP (292 aa)) form a catalytic region. Zn(2+) is bound by residues cysteine 333, histidine 384, and histidine 510.

It belongs to the class-II aminoacyl-tRNA synthetase family. In terms of assembly, homodimer. Zn(2+) serves as cofactor.

It localises to the cytoplasm. The enzyme catalyses tRNA(Thr) + L-threonine + ATP = L-threonyl-tRNA(Thr) + AMP + diphosphate + H(+). Its function is as follows. Catalyzes the attachment of threonine to tRNA(Thr) in a two-step reaction: L-threonine is first activated by ATP to form Thr-AMP and then transferred to the acceptor end of tRNA(Thr). Also edits incorrectly charged L-seryl-tRNA(Thr). This Pseudomonas syringae pv. tomato (strain ATCC BAA-871 / DC3000) protein is Threonine--tRNA ligase.